The chain runs to 429 residues: Glutamate-1-semialdehyde 2,1-aminomutase 2 (429 aa).

K268 is subject to N6-(pyridoxal phosphate)lysine.

It belongs to the class-III pyridoxal-phosphate-dependent aminotransferase family. HemL subfamily. In terms of assembly, homodimer. The cofactor is pyridoxal 5'-phosphate.

It localises to the cytoplasm. The enzyme catalyses (S)-4-amino-5-oxopentanoate = 5-aminolevulinate. The protein operates within porphyrin-containing compound metabolism; protoporphyrin-IX biosynthesis; 5-aminolevulinate from L-glutamyl-tRNA(Glu): step 2/2. The polypeptide is Glutamate-1-semialdehyde 2,1-aminomutase 2 (Listeria monocytogenes serotype 4a (strain HCC23)).